We begin with the raw amino-acid sequence, 306 residues long: Phosphoadenosine phosphosulfate reductase (306 aa).

Disordered regions lie at residues 1–30 (MPAKMHSNYPSDSETAELRDSTESGYVSGG) and 245–266 (YHSTSPVKENEDERSGRWKGQA).

This sequence belongs to the PAPS reductase family. CysH subfamily.

The enzyme catalyses [thioredoxin]-disulfide + sulfite + adenosine 3',5'-bisphosphate + 2 H(+) = [thioredoxin]-dithiol + 3'-phosphoadenylyl sulfate. Its pathway is sulfur metabolism; hydrogen sulfide biosynthesis; sulfite from sulfate: step 3/3. The NADP dependent reduction of PAPS into sulfite involves thioredoxin which probably plays the role of a thiol carrier. The polypeptide is Phosphoadenosine phosphosulfate reductase (sA) (Emericella nidulans (strain FGSC A4 / ATCC 38163 / CBS 112.46 / NRRL 194 / M139) (Aspergillus nidulans)).